The primary structure comprises 1232 residues: uncharacterized protein (1232 aa).

This sequence belongs to the Mg-chelatase subunit H family.

This is an uncharacterized protein from Methanocaldococcus jannaschii (strain ATCC 43067 / DSM 2661 / JAL-1 / JCM 10045 / NBRC 100440) (Methanococcus jannaschii).